The primary structure comprises 600 residues: DDB1- and CUL4-associated factor 15 (600 aa).

The disordered stretch occupies residues 1-30 (MAPSSKSERNSGAGSGGGGPGGAGGKRAAG). Residues 13-27 (AGSGGGGPGGAGGKR) are compositionally biased toward gly residues. Ser-50 carries the phosphoserine modification. Residues Cys-193, Cys-196, Cys-211, and His-214 each contribute to the Zn(2+) site. E7820 contacts are provided by residues Phe-231 and 234–235 (AF). Over residues 280-295 (PASPPEPQSPELPPAL) the composition is skewed to pro residues. Residues 280–316 (PASPPEPQSPELPPALPSFCPEAAPARSSGSPEPSPA) are disordered. A phosphoserine mark is found at Ser-310 and Ser-314.

Component of the DCX(DCAF15) complex, also named CLR4(DCAF15) complex, composed of DCAF15, DDB1, cullin-4 (CUL4A or CUL4B), DDA1 and RBX1.

Its pathway is protein modification; protein ubiquitination. With respect to regulation, aryl sulfonamide anticancer drugs change the substrate specificity of DCAF15 by acting as a molecular glue that promotes binding between DCAF15 and weak affinity interactors, such as RBM39. Functionally, substrate-recognition component of the DCX(DCAF15) complex, a cullin-4-RING E3 ubiquitin-protein ligase complex that mediates ubiquitination and degradation of target proteins. The DCX(DCAF15) complex acts as a regulator of the natural killer (NK) cells effector functions, possibly by mediating ubiquitination and degradation of cohesin subunits SMC1A and SMC3. May play a role in the activation of antigen-presenting cells (APC) and their interaction with NK cells. Binding of aryl sulfonamide anticancer drugs, such as indisulam (E7070) or E7820, change the substrate specificity of the DCX(DCAF15) complex, leading to promote ubiquitination and degradation of splicing factor RBM39. RBM39 degradation results in splicing defects and death in cancer cell lines. Aryl sulfonamide anticancer drugs change the substrate specificity of DCAF15 by acting as a molecular glue that promotes binding between DCAF15 and weak affinity interactor RBM39. Aryl sulfonamide anticancer drugs also promote ubiquitination and degradation of RBM23 and PRPF39. This chain is DDB1- and CUL4-associated factor 15, found in Homo sapiens (Human).